Here is a 1122-residue protein sequence, read N- to C-terminus: MTKKKAATNYAERQNLASEDSSGDSVHFKDFIPLQELLKDKNYVPSVENLEKILYNETMFNDQKICSNLLLEALIITLFTTISGKSALRLIQTSSLKERKSWAQSFENNSSSYASIVLSWKDNDILLLKFLRFLLANKTAPLQINRYNLPEYKLPLSFLIVSKITIPSILLNETYNLLKDYLYSITGRIESLISCSSTFDKPALVVRKILKDYNRMIECRNFYFWYSFNAENRVNLTFSDNISLLMENDEGNAGSGLDDSRFDHQKQPREAIMGRTINDQEQIYSFELNQDGTLEIPNVMEHSLLRHELLFKILNLTTVLTPLLELQFSTLCGLVDPLMQPTPNDKHIISIDFLFQLFLGLMSQSIKTSQEHNDHYDWKFYMCFNMQKIIDATMLRLNCFDFDILNSVNNTDNAVHWKTQLHRWLPHGLNTQDLELLYMIDILAVYTIYKLYEKIPIQLNPFLFSLISLWKNLSCVILLALEIDRIEEENGTYETPLMVRATIRGAAALRSVIATVLNGLVKNNDHDFKHESLNTFMSPYGRKLCHGALYADLRSHTASLLALGASIEDVTDLFADLQSGDRFDEDIRYMFDYECEDYDESFSESDHGGLDESVVNPTEKIASGSNNVFFRRRCNCIFNDDKLVAEDGANEAFGSTNSENVEGAMHNNRNAVHNATTATSDHVVTSPNPLSVRSRSTFEFDYSGEDWRDVPRDFNMYYSPSYSFIHEPKLDVIFSLTLRGATEKLNKEESILLVRSVASCVRNEQDQMILADLESNFSASINGDVEGEGNTKMSKIDNEDLRRTTPDDIYEIWSEESAFERMLNVNHDVAWRLMDEMLMCTGYRRILIWFLTHLELKHSLIYYVFELIMGLRGKPFSGEASDQDKKDDMIYEILKKKQKNEDASGLPFSRQGPIVLSDIETKMLLQEFFMNAAIFLSSKNNEEENEDGEKISLYSLGLVRLICYMVQTLIANDKFFFTKSECTFELQTLLMTWIGILPEAKDLFFKIKTRLAMEEEDSADTMQHEGRKNSDIEKKLNAKPASELNLKLLNLFPSKPANKDDSSPINTLRSFIADYSFDTQVNPPGRRVVFYDGKILPLPKADKPIPLHEYITLAELDVGDSE.

Residues methionine 1–aspartate 24 are disordered. Positions alanine 11–aspartate 24 are enriched in polar residues. Position 1042 is a phosphoserine (serine 1042).

Subunit of the 1.0 MDa CCR4-NOT core complex that contains CCR4, CAF1, NOT1, NOT2, NOT3, NOT4, NOT5, CAF40 and CAF130. In the complex interacts with NOT1. The core complex probably is part of a less characterized 1.9 MDa CCR4-NOT complex.

The protein resides in the cytoplasm. It is found in the nucleus. Functionally, acts as a component of the CCR4-NOT core complex, which in the nucleus seems to be a general transcription factor, and in the cytoplasm the major mRNA deadenylase involved in mRNA turnover. This is Protein CAF130 (CAF130) from Saccharomyces cerevisiae (strain ATCC 204508 / S288c) (Baker's yeast).